The chain runs to 382 residues: UDP-4-amino-4-deoxy-L-arabinose--oxoglutarate aminotransferase (382 aa).

An N6-(pyridoxal phosphate)lysine modification is found at Lys183.

This sequence belongs to the DegT/DnrJ/EryC1 family. ArnB subfamily. As to quaternary structure, homodimer. It depends on pyridoxal 5'-phosphate as a cofactor.

The catalysed reaction is UDP-4-amino-4-deoxy-beta-L-arabinose + 2-oxoglutarate = UDP-beta-L-threo-pentopyranos-4-ulose + L-glutamate. It functions in the pathway nucleotide-sugar biosynthesis; UDP-4-deoxy-4-formamido-beta-L-arabinose biosynthesis; UDP-4-deoxy-4-formamido-beta-L-arabinose from UDP-alpha-D-glucuronate: step 2/3. Its pathway is bacterial outer membrane biogenesis; lipopolysaccharide biosynthesis. Functionally, catalyzes the conversion of UDP-4-keto-arabinose (UDP-Ara4O) to UDP-4-amino-4-deoxy-L-arabinose (UDP-L-Ara4N). The modified arabinose is attached to lipid A and is required for resistance to polymyxin and cationic antimicrobial peptides. This is UDP-4-amino-4-deoxy-L-arabinose--oxoglutarate aminotransferase from Pseudomonas aeruginosa (strain UCBPP-PA14).